Consider the following 192-residue polypeptide: Fe/S biogenesis protein NfuA (192 aa).

The [4Fe-4S] cluster site is built by Cys-150 and Cys-153.

The protein belongs to the NfuA family. In terms of assembly, homodimer. The cofactor is [4Fe-4S] cluster.

Involved in iron-sulfur cluster biogenesis. Binds a 4Fe-4S cluster, can transfer this cluster to apoproteins, and thereby intervenes in the maturation of Fe/S proteins. Could also act as a scaffold/chaperone for damaged Fe/S proteins. The sequence is that of Fe/S biogenesis protein NfuA from Buchnera aphidicola subsp. Acyrthosiphon pisum (strain APS) (Acyrthosiphon pisum symbiotic bacterium).